The following is a 195-amino-acid chain: Peptide deformylase (195 aa).

Residues Cys-102 and His-144 each coordinate Fe cation. Glu-145 is a catalytic residue. His-148 contributes to the Fe cation binding site.

Belongs to the polypeptide deformylase family. It depends on Fe(2+) as a cofactor.

The catalysed reaction is N-terminal N-formyl-L-methionyl-[peptide] + H2O = N-terminal L-methionyl-[peptide] + formate. Removes the formyl group from the N-terminal Met of newly synthesized proteins. Requires at least a dipeptide for an efficient rate of reaction. N-terminal L-methionine is a prerequisite for activity but the enzyme has broad specificity at other positions. This Salinibacter ruber (strain DSM 13855 / M31) protein is Peptide deformylase.